Reading from the N-terminus, the 252-residue chain is 2-succinyl-6-hydroxy-2,4-cyclohexadiene-1-carboxylate synthase (252 aa).

Belongs to the AB hydrolase superfamily. MenH family. As to quaternary structure, monomer.

The enzyme catalyses 5-enolpyruvoyl-6-hydroxy-2-succinyl-cyclohex-3-ene-1-carboxylate = (1R,6R)-6-hydroxy-2-succinyl-cyclohexa-2,4-diene-1-carboxylate + pyruvate. It participates in quinol/quinone metabolism; 1,4-dihydroxy-2-naphthoate biosynthesis; 1,4-dihydroxy-2-naphthoate from chorismate: step 3/7. It functions in the pathway quinol/quinone metabolism; menaquinone biosynthesis. In terms of biological role, catalyzes a proton abstraction reaction that results in 2,5-elimination of pyruvate from 2-succinyl-5-enolpyruvyl-6-hydroxy-3-cyclohexene-1-carboxylate (SEPHCHC) and the formation of 2-succinyl-6-hydroxy-2,4-cyclohexadiene-1-carboxylate (SHCHC). This chain is 2-succinyl-6-hydroxy-2,4-cyclohexadiene-1-carboxylate synthase, found in Shigella sonnei (strain Ss046).